We begin with the raw amino-acid sequence, 443 residues long: Serine transporter (443 aa).

A run of 11 helical transmembrane segments spans residues 38 to 60, 65 to 87, 111 to 131, 150 to 170, 183 to 203, 215 to 235, 265 to 285, 319 to 339, 368 to 388, 390 to 410, and 422 to 442; these read TGWV…PVQV, LWVF…RLFI, WGIL…FVYS, GLLS…VAIS, GMVL…VGMW, GLLV…ILFI, IAFG…TLAM, VSVI…YLGF, GIMI…APVL, FTSI…AWLV, and MSLY…FLAF.

This sequence belongs to the amino acid/polyamine transporter 2 family. SdaC/TdcC subfamily.

It is found in the cell inner membrane. Transports both D- and L-serine; allows growth of strain CFT073 cells normally unable to transport D-serine on that substrate. Transport relies on the H(+) gradient and is not competed by L-threonine. May play a role in L-cysteine detoxification. The protein is Serine transporter of Escherichia coli O157:H7.